Consider the following 184-residue polypeptide: MKMDADSSGTEHRDSRGSRSRSWREREHHGRTSERDSRKKEHKIPYFADEVREQDRIRSLRQRAHQSTRRTRSRSRSQSSDRGSRHRRHRQRSRSRNRSRSRSSERRRRQRSPHRYNPPPKIINYYVQVPPQDFYGMPGMRQSFGYQRLPRPPPFPPAPFRYRQRQPFMGAPRFGYRNAGRPPY.

2 stretches are compositionally biased toward basic and acidic residues: residues 1 to 39 and 49 to 58; these read MKMDADSSGTEHRDSRGSRSRSWREREHHGRTSERDSRK and DEVREQDRIR. 2 disordered regions span residues 1–123 and 146–184; these read MKMD…PKII and YQRLPRPPPFPPAPFRYRQRQPFMGAPRFGYRNAGRPPY. Composition is skewed to basic residues over residues 59–75 and 84–114; these read SLRQRAHQSTRRTRSRS and SRHRRHRQRSRSRNRSRSRSSERRRRQRSPH. Positions 150–159 are enriched in pro residues; that stretch reads PRPPPFPPAP.

Its subcellular location is the nucleus speckle. Functionally, member of the regulatory pathway controlling female somatic sexual differentiation, regulated by Sxl. Activates dsx female-specific splicing by promoting the formation of a splicing enhancer complex which consists of tra, tra2 and sr proteins. In Drosophila simulans (Fruit fly), this protein is Female-specific protein transformer (tra).